Here is a 1212-residue protein sequence, read N- to C-terminus: Metabotropic glutamate receptor 5 (1212 aa).

Positions 1–20 (MVLLLILSVLLLKEDVRGSA) are cleaved as a signal peptide. Topologically, residues 22–580 (SSERRVVAHM…QYLRWGDPEP (559 aa)) are extracellular. Cys-57 and Cys-99 form a disulfide bridge. An L-glutamate-binding site is contributed by Tyr-64. Asn-88 carries N-linked (GlcNAc...) asparagine glycosylation. L-glutamate-binding positions include Ser-152 and 173–175 (SAT). N-linked (GlcNAc...) asparagine glycosylation is present at Asn-210. Tyr-223 contributes to the L-glutamate binding site. Disulfide bonds link Cys-241–Cys-530, Cys-276–Cys-278, Cys-365–Cys-381, Cys-419–Cys-426, Cys-511–Cys-531, Cys-515–Cys-534, Cys-537–Cys-549, and Cys-552–Cys-565. Position 305 (Asp-305) interacts with L-glutamate. Residues Asn-378 and Asn-382 are each glycosylated (N-linked (GlcNAc...) asparagine). Lys-396 is a binding site for L-glutamate. A glycan (N-linked (GlcNAc...) asparagine) is linked at Asn-445. The chain crosses the membrane as a helical span at residues 581 to 603 (IAAVVFACLGLLATLFVTVVFII). Residues 604-613 (YRDTPVVKSS) are Cytoplasmic-facing. A helical membrane pass occupies residues 614–636 (SRELCYIILAGICLGYLCTFCLI). Over 637 to 644 (AKPKQIYC) the chain is Extracellular. A disulfide bridge links Cys-644 with Cys-733. The helical transmembrane segment at 645–667 (YLQRIGIGLSPAMSYSALVTKTN) threads the bilayer. The Cytoplasmic portion of the chain corresponds to 668–693 (RIARILAGSKKKICTKKPRFMSACAQ). Residues 694–714 (LVIAFILICIQLGIIVALFIM) form a helical membrane-spanning segment. Residues 715–737 (EPPDIMHDYPSIREVYLICNTTN) lie on the Extracellular side of the membrane. N-linked (GlcNAc...) asparagine glycosylation is present at Asn-734. A helical transmembrane segment spans residues 738 to 759 (LGVVTPLGYNGLLILSCTFYAF). At 760–772 (KTRNVPANFNEAK) the chain is on the cytoplasmic side. Residues 773-795 (YIAFTMYTTCIIWLAFVPIYFGS) form a helical membrane-spanning segment. The Extracellular portion of the chain corresponds to 796-798 (NYK). Residues 799 to 820 (IITMCFSVSLSATVALGCMFVP) traverse the membrane as a helical segment. Topologically, residues 821-1212 (KVYIILAKPE…RDYTQSSSSL (392 aa)) are cytoplasmic. The residue at position 861 (Ser-861) is a Phosphoserine. Residues Arg-869 and Arg-925 each carry the omega-N-methylarginine modification. Disordered regions lie at residues 937–971 (INKK…GGSA), 1010–1056 (FPAP…SQGS), and 1132–1191 (GAQA…ALCI). The span at 961–971 (LGAGAGAGGSA) shows a compositional bias: gly residues. A phosphoserine mark is found at Ser-1018 and Ser-1020. Low complexity predominate over residues 1132 to 1153 (GAQAAGDAARESPAAGPEAAAA). Over residues 1174–1185 (DSGSTTPNSPVS) the composition is skewed to polar residues.

It belongs to the G-protein coupled receptor 3 family. As to quaternary structure, the PPXXF motif binds HOMER1, HOMER2 and HOMER3. Interacts with SIAH1, RYR1, RYR2, ITPR1, SHANK1, SHANK3 and TAMALIN. Interacts with NCDN. Isoform 2 interacts with NECAB2. Interacts with CAMK2A.

It localises to the cell membrane. In terms of biological role, G-protein coupled receptor for glutamate. Ligand binding causes a conformation change that triggers signaling via guanine nucleotide-binding proteins (G proteins) and modulates the activity of down-stream effectors. Signaling activates a phosphatidylinositol-calcium second messenger system and generates a calcium-activated chloride current. Plays an important role in the regulation of synaptic plasticity and the modulation of the neural network activity. This Homo sapiens (Human) protein is Metabotropic glutamate receptor 5 (GRM5).